Consider the following 284-residue polypeptide: MEMO1 family protein MMP1387 (284 aa).

This sequence belongs to the MEMO1 family.

The chain is MEMO1 family protein MMP1387 from Methanococcus maripaludis (strain DSM 14266 / JCM 13030 / NBRC 101832 / S2 / LL).